A 126-amino-acid polypeptide reads, in one-letter code: Probable V-type proton ATPase subunit G (126 aa).

Belongs to the V-ATPase G subunit family. As to quaternary structure, V-ATPase is a heteromultimeric enzyme made up of two complexes: the ATP-hydrolytic V1 complex and the proton translocation V0 complex. The V1 complex consists of three catalytic AB heterodimers that form a heterohexamer, three peripheral stalks each consisting of EG heterodimers, one central rotor including subunits D and F, and the regulatory subunits C and H. The proton translocation complex V0 consists of the proton transport subunit a, a ring of proteolipid subunits c9c'', rotary subunit d, subunits e and f, and the accessory subunits vah-19/Ac45 and vah-20/PRR. Interacts with ced-1.

Subunit of the V1 complex of vacuolar(H+)-ATPase (V-ATPase), a multisubunit enzyme composed of a peripheral complex (V1) that hydrolyzes ATP and a membrane integral complex (V0) that translocates protons. V-ATPase is responsible for acidifying and maintaining the pH of intracellular compartments and in some cell types, is targeted to the plasma membrane, where it is responsible for acidifying the extracellular environment. In neurons, required for necrotic cell death by promoting intracellular acidification. The protein is Probable V-type proton ATPase subunit G of Caenorhabditis elegans.